A 359-amino-acid polypeptide reads, in one-letter code: UDP-N-acetylglucosamine--N-acetylmuramyl-(pentapeptide) pyrophosphoryl-undecaprenol N-acetylglucosamine transferase (359 aa).

UDP-N-acetyl-alpha-D-glucosamine is bound by residues 15–17, Asn-127, Arg-166, Ser-191, Ile-245, 264–269, and Gln-290; these read TGG and ALTVSE.

Belongs to the glycosyltransferase 28 family. MurG subfamily.

The protein resides in the cell inner membrane. It catalyses the reaction di-trans,octa-cis-undecaprenyl diphospho-N-acetyl-alpha-D-muramoyl-L-alanyl-D-glutamyl-meso-2,6-diaminopimeloyl-D-alanyl-D-alanine + UDP-N-acetyl-alpha-D-glucosamine = di-trans,octa-cis-undecaprenyl diphospho-[N-acetyl-alpha-D-glucosaminyl-(1-&gt;4)]-N-acetyl-alpha-D-muramoyl-L-alanyl-D-glutamyl-meso-2,6-diaminopimeloyl-D-alanyl-D-alanine + UDP + H(+). It functions in the pathway cell wall biogenesis; peptidoglycan biosynthesis. Its function is as follows. Cell wall formation. Catalyzes the transfer of a GlcNAc subunit on undecaprenyl-pyrophosphoryl-MurNAc-pentapeptide (lipid intermediate I) to form undecaprenyl-pyrophosphoryl-MurNAc-(pentapeptide)GlcNAc (lipid intermediate II). The protein is UDP-N-acetylglucosamine--N-acetylmuramyl-(pentapeptide) pyrophosphoryl-undecaprenol N-acetylglucosamine transferase of Pseudomonas putida (strain ATCC 47054 / DSM 6125 / CFBP 8728 / NCIMB 11950 / KT2440).